Reading from the N-terminus, the 202-residue chain is GTP cyclohydrolase 1 (202 aa).

Zn(2+) contacts are provided by Cys-90, His-93, and Cys-163.

It belongs to the GTP cyclohydrolase I family. Homomer.

It catalyses the reaction GTP + H2O = 7,8-dihydroneopterin 3'-triphosphate + formate + H(+). It functions in the pathway cofactor biosynthesis; 7,8-dihydroneopterin triphosphate biosynthesis; 7,8-dihydroneopterin triphosphate from GTP: step 1/1. The protein is GTP cyclohydrolase 1 of Mycobacterium marinum (strain ATCC BAA-535 / M).